We begin with the raw amino-acid sequence, 361 residues long: Mitogen-activated protein kinase 14B (361 aa).

In terms of domain architecture, Protein kinase spans 25–309; it reads YQNLSPVGSG…ASQALAHPYF (285 aa). Residues 31–39 and Lys-54 contribute to the ATP site; that span reads VGSGAYGSV. Catalysis depends on Asp-151, which acts as the Proton acceptor. A Phosphothreonine; by MAP2K6 modification is found at Thr-181. Positions 181–183 match the TXY motif; that stretch reads TGY. A Phosphotyrosine; by MAP2K6 modification is found at Tyr-183.

The protein belongs to the protein kinase superfamily. CMGC Ser/Thr protein kinase family. MAP kinase subfamily. Mg(2+) serves as cofactor. Dually phosphorylated on Thr-181 and Tyr-183, which activates the enzyme. Predominantly expressed in the ovary. Lower levels present in brain, gill, heart, spleen, kidney, muscle and gut.

The protein resides in the cytoplasm. It is found in the nucleus. It catalyses the reaction L-seryl-[protein] + ATP = O-phospho-L-seryl-[protein] + ADP + H(+). It carries out the reaction L-threonyl-[protein] + ATP = O-phospho-L-threonyl-[protein] + ADP + H(+). Its activity is regulated as follows. Activated by threonine and tyrosine phosphorylation by the dual specificity kinase, MKK6. In terms of biological role, serine/threonine kinase which acts as an essential component of the MAP kinase signal transduction pathway. Mapk14b is one of the four p38 MAPKs which play an important role in the cascades of cellular responses evoked by extracellular stimuli such as pro-inflammatory cytokines or physical stress leading to direct activation of transcription factors. Accordingly, p38 MAPKs phosphorylate a broad range of proteins and it has been estimated that they may have approximately 200 to 300 substrates each. Some of the targets are downstream kinases which are activated through phosphorylation and further phosphorylate additional targets. The polypeptide is Mitogen-activated protein kinase 14B (mapk14b) (Cyprinus carpio (Common carp)).